The sequence spans 1780 residues: Protein TIC 214 (1780 aa).

Transmembrane regions (helical) follow at residues Ile-19–Gly-39, Phe-68–Leu-88, Pro-91–Asn-111, Val-133–Leu-153, Val-176–Ile-196, and Ile-227–Ile-247. The disordered stretch occupies residues Lys-251–Ala-275. Residues Gly-254–Gln-268 show a composition bias toward basic and acidic residues.

Belongs to the TIC214 family. Part of the Tic complex.

It localises to the plastid. The protein localises to the chloroplast inner membrane. In terms of biological role, involved in protein precursor import into chloroplasts. May be part of an intermediate translocation complex acting as a protein-conducting channel at the inner envelope. This chain is Protein TIC 214, found in Draba nemorosa (Woodland whitlowgrass).